A 493-amino-acid polypeptide reads, in one-letter code: Glutamyl-tRNA(Gln) amidotransferase subunit A (493 aa).

Active-site charge relay system residues include lysine 79 and serine 159. Serine 183 functions as the Acyl-ester intermediate in the catalytic mechanism.

This sequence belongs to the amidase family. GatA subfamily. As to quaternary structure, heterotrimer of A, B and C subunits.

It catalyses the reaction L-glutamyl-tRNA(Gln) + L-glutamine + ATP + H2O = L-glutaminyl-tRNA(Gln) + L-glutamate + ADP + phosphate + H(+). In terms of biological role, allows the formation of correctly charged Gln-tRNA(Gln) through the transamidation of misacylated Glu-tRNA(Gln) in organisms which lack glutaminyl-tRNA synthetase. The reaction takes place in the presence of glutamine and ATP through an activated gamma-phospho-Glu-tRNA(Gln). In Brucella suis (strain ATCC 23445 / NCTC 10510), this protein is Glutamyl-tRNA(Gln) amidotransferase subunit A.